The chain runs to 260 residues: Ribosomal RNA small subunit methyltransferase J (260 aa).

S-adenosyl-L-methionine contacts are provided by residues 125-126 (ER) and Asp179.

The protein belongs to the methyltransferase superfamily. RsmJ family.

The protein localises to the cytoplasm. The enzyme catalyses guanosine(1516) in 16S rRNA + S-adenosyl-L-methionine = N(2)-methylguanosine(1516) in 16S rRNA + S-adenosyl-L-homocysteine + H(+). Its function is as follows. Specifically methylates the guanosine in position 1516 of 16S rRNA. This chain is Ribosomal RNA small subunit methyltransferase J, found in Pseudomonas fluorescens (strain ATCC BAA-477 / NRRL B-23932 / Pf-5).